A 496-amino-acid polypeptide reads, in one-letter code: Beta-amylase (496 aa).

The substrate site is built by Asp54, His94, and Asp102. Glu187 functions as the Proton donor in the catalytic mechanism. Substrate contacts are provided by Lys296, His301, and Thr343. Glu381 functions as the Proton acceptor in the catalytic mechanism. Residues 382–383 (NA) and Arg421 each bind substrate.

It belongs to the glycosyl hydrolase 14 family.

The catalysed reaction is Hydrolysis of (1-&gt;4)-alpha-D-glucosidic linkages in polysaccharides so as to remove successive maltose units from the non-reducing ends of the chains.. This chain is Beta-amylase (BMY1), found in Vigna unguiculata (Cowpea).